The primary structure comprises 504 residues: Anaerobic nitric oxide reductase transcription regulator NorR (504 aa).

Aspartate 57 bears the 4-aspartylphosphate mark. Positions 187-416 (MIGLSPGMMQ…LEHAIHRAVV (230 aa)) constitute a Sigma-54 factor interaction domain. ATP contacts are provided by residues 215-222 (GETGTGKE) and 278-287 (ADNGTLFLDE). Positions 479 to 498 (WAACARALEMDVANLHRLAK) form a DNA-binding region, H-T-H motif.

The protein operates within nitrogen metabolism; nitric oxide reduction. Functionally, required for the expression of anaerobic nitric oxide (NO) reductase, acts as a transcriptional activator for at least the norVW operon. Activation also requires sigma-54. The sequence is that of Anaerobic nitric oxide reductase transcription regulator NorR from Enterobacter sp. (strain 638).